The sequence spans 125 residues: Phosphoribosyl-AMP cyclohydrolase (125 aa).

Position 74 (aspartate 74) interacts with Mg(2+). Position 75 (cysteine 75) interacts with Zn(2+). 2 residues coordinate Mg(2+): aspartate 76 and aspartate 78. Zn(2+) contacts are provided by cysteine 92 and cysteine 99.

This sequence belongs to the PRA-CH family. As to quaternary structure, homodimer. Mg(2+) is required as a cofactor. Requires Zn(2+) as cofactor.

The protein resides in the cytoplasm. The catalysed reaction is 1-(5-phospho-beta-D-ribosyl)-5'-AMP + H2O = 1-(5-phospho-beta-D-ribosyl)-5-[(5-phospho-beta-D-ribosylamino)methylideneamino]imidazole-4-carboxamide. It participates in amino-acid biosynthesis; L-histidine biosynthesis; L-histidine from 5-phospho-alpha-D-ribose 1-diphosphate: step 3/9. Catalyzes the hydrolysis of the adenine ring of phosphoribosyl-AMP. In Pelobacter propionicus (strain DSM 2379 / NBRC 103807 / OttBd1), this protein is Phosphoribosyl-AMP cyclohydrolase.